A 1330-amino-acid polypeptide reads, in one-letter code: ABC multidrug transporter mdr4 (1330 aa).

The N-linked (GlcNAc...) asparagine glycan is linked to Asn-3. The next 6 membrane-spanning stretches (helical) occupy residues 90-110 (VLLIIGGLLFAICAGIPFPLL), 144-164 (VLYVIYITIANFCFIYAHSTC), 218-238 (KVGLVISTLSYFVAAYVVAFI), 243-263 (IAGMLVSVVPCFFLMALGGGH), 324-344 (HAAQLGCLYFIAYSANALAFW), and 370-390 (IFVLIDASFILSQVAPFIHVF). An ABC transmembrane type-1 1 domain is found at 94 to 392 (IGGLLFAICA…VAPFIHVFAS (299 aa)). The 239-residue stretch at 428–666 (IRFRDVHFKY…GGVYAEMVRL (239 aa)) folds into the ABC transporter 1 domain. Residue 463-470 (GPSGGGKS) coordinates ATP. Asn-707 is a glycosylation site (N-linked (GlcNAc...) asparagine). A disordered region spans residues 717 to 736 (VADTPSDSRDGSEEEARKKR). The segment covering 722-733 (SDSRDGSEEEAR) has biased composition (basic and acidic residues). 6 helical membrane-spanning segments follow: residues 761 to 781 (LLGLAMSVIIGGSYSAEAIVF), 806 to 826 (LLFFILALVEFGANVVGGCAF), 871 to 893 (ASALGGITGTTIGLLLATAVNLI), 903 to 923 (AWKITIVLFPTIPVLLVSGMM), 989 to 1009 (AWLALAFSISNLVYALAYWWG), and 1023 to 1043 (FFIVMPALLFSTQSCGQMFAL). Positions 761-1049 (LLGLAMSVII…MFALAPDISK (289 aa)) constitute an ABC transmembrane type-1 2 domain. One can recognise an ABC transporter 2 domain in the interval 1086-1325 (AQLRDVHFTY…SETYRTSVIH (240 aa)). ATP is bound at residue 1121-1128 (GPSGSGKS).

The protein belongs to the ABC transporter superfamily. ABCB family. Multidrug resistance exporter (TC 3.A.1.201) subfamily.

The protein localises to the cell membrane. The enzyme catalyses itraconazole(in) + ATP + H2O = itraconazole(out) + ADP + phosphate + H(+). It catalyses the reaction voriconazole(in) + ATP + H2O = voriconazole(out) + ADP + phosphate + H(+). In terms of biological role, pleiotropic ABC efflux transporter that confers resistance to azoles such as itraconazole and voriconazole. The chain is ABC multidrug transporter mdr4 from Aspergillus fumigatus (strain ATCC MYA-4609 / CBS 101355 / FGSC A1100 / Af293) (Neosartorya fumigata).